The sequence spans 617 residues: Translation initiation factor IF-2 (617 aa).

The segment covering Met-1 to Lys-11 has biased composition (basic residues). The interval Met-1–Gln-25 is disordered. The tr-type G domain maps to Pro-119 to Tyr-288. Positions Gly-128–Thr-135 are G1. Gly-128–Thr-135 is a binding site for GTP. The interval Gly-153–Lys-157 is G2. The segment at Asp-175 to Gly-178 is G3. GTP-binding positions include Asp-175–His-179 and Asn-229–Asp-232. Residues Asn-229–Asp-232 are G4. The G5 stretch occupies residues Ser-265–Leu-267.

It belongs to the TRAFAC class translation factor GTPase superfamily. Classic translation factor GTPase family. IF-2 subfamily.

It is found in the cytoplasm. In terms of biological role, one of the essential components for the initiation of protein synthesis. Protects formylmethionyl-tRNA from spontaneous hydrolysis and promotes its binding to the 30S ribosomal subunits. Also involved in the hydrolysis of GTP during the formation of the 70S ribosomal complex. The sequence is that of Translation initiation factor IF-2 (infB) from Mycoplasma pneumoniae (strain ATCC 29342 / M129 / Subtype 1) (Mycoplasmoides pneumoniae).